A 306-amino-acid chain; its full sequence is Ribonuclease H2 subunit B (306 aa).

The interval 232–285 (LPDLSSPTPEPPVKKRKVSEAPVEAEEDYTKFNSDSKNKKSNSKMTAAQKSLAK) is disordered. Residues 259–269 (DYTKFNSDSKN) show a composition bias toward basic and acidic residues.

The protein belongs to the RNase H2 subunit B family. In terms of assembly, the RNase H2 complex is a heterotrimer composed of the catalytic subunit rnaseh2a and the non-catalytic subunits rnaseh2b and rnaseh2c.

It localises to the nucleus. Non catalytic subunit of RNase H2, an endonuclease that specifically degrades the RNA of RNA:DNA hybrids. Participates in DNA replication, possibly by mediating the removal of lagging-strand Okazaki fragment RNA primers during DNA replication. Mediates the excision of single ribonucleotides from DNA:RNA duplexes. This is Ribonuclease H2 subunit B (rnaseh2b) from Xenopus tropicalis (Western clawed frog).